Consider the following 312-residue polypeptide: tRNA dimethylallyltransferase (312 aa).

11 to 18 is an ATP binding site; sequence GATATGKT. 13–18 lines the substrate pocket; that stretch reads TATGKT. The interval 36 to 39 is interaction with substrate tRNA; it reads DSRQ.

Belongs to the IPP transferase family. As to quaternary structure, monomer. Mg(2+) is required as a cofactor.

It catalyses the reaction adenosine(37) in tRNA + dimethylallyl diphosphate = N(6)-dimethylallyladenosine(37) in tRNA + diphosphate. Functionally, catalyzes the transfer of a dimethylallyl group onto the adenine at position 37 in tRNAs that read codons beginning with uridine, leading to the formation of N6-(dimethylallyl)adenosine (i(6)A). In Thermosynechococcus vestitus (strain NIES-2133 / IAM M-273 / BP-1), this protein is tRNA dimethylallyltransferase.